The primary structure comprises 367 residues: Glutamate 5-kinase (367 aa).

Lys10 is a binding site for ATP. Ser50, Asp137, and Asn149 together coordinate substrate. ATP is bound by residues 169 to 170 (TD) and 211 to 217 (TGGMSTK). The region spanning 275-353 (AGEITVDEGA…QQIDAILGYE (79 aa)) is the PUA domain.

Belongs to the glutamate 5-kinase family.

Its subcellular location is the cytoplasm. The enzyme catalyses L-glutamate + ATP = L-glutamyl 5-phosphate + ADP. It functions in the pathway amino-acid biosynthesis; L-proline biosynthesis; L-glutamate 5-semialdehyde from L-glutamate: step 1/2. Functionally, catalyzes the transfer of a phosphate group to glutamate to form L-glutamate 5-phosphate. The protein is Glutamate 5-kinase of Salmonella arizonae (strain ATCC BAA-731 / CDC346-86 / RSK2980).